Here is a 173-residue protein sequence, read N- to C-terminus: Photosystem I assembly protein Ycf3 (173 aa).

TPR repeat units lie at residues 35–68 (AYVY…EDNP), 72–105 (GETL…NSNQ), and 120–153 (GRIA…NPGG).

It belongs to the Ycf3 family.

The protein localises to the cellular thylakoid membrane. Its function is as follows. Essential for the assembly of the photosystem I (PSI) complex. May act as a chaperone-like factor to guide the assembly of the PSI subunits. The polypeptide is Photosystem I assembly protein Ycf3 (Parasynechococcus marenigrum (strain WH8102)).